The following is a 231-amino-acid chain: Small ribosomal subunit protein uS3 (231 aa).

Positions 39–107 (VREFLKEKLK…PAQINIAEVR (69 aa)) constitute a KH type-2 domain.

This sequence belongs to the universal ribosomal protein uS3 family. Part of the 30S ribosomal subunit. Forms a tight complex with proteins S10 and S14.

Its function is as follows. Binds the lower part of the 30S subunit head. Binds mRNA in the 70S ribosome, positioning it for translation. The polypeptide is Small ribosomal subunit protein uS3 (Colwellia psychrerythraea (strain 34H / ATCC BAA-681) (Vibrio psychroerythus)).